The primary structure comprises 667 residues: High affinity sulfate transporter 1 (667 aa).

Residues 16 to 38 are disordered; it reads ETRSNSSSHRHGGGGGGDDTTSL. 11 consecutive transmembrane segments (helical) span residues 106–126, 131–151, 156–176, 185–205, 208–228, 269–289, 296–316, 350–370, 425–445, 452–472, and 486–506; these read GDFI…LAYA, LDPW…AFMG, IAIG…SNEI, LRLA…LGVC, GFLI…GAAI, WETI…KYIA, FWVS…FVYI, GAGV…AIAI, VSNI…TPLF, VLAS…AMVL, and GAFF…AVAI. Residues 537 to 660 enclose the STAS domain; that stretch reads QYPKAAQIPG…LTVADAVATY (124 aa).

This sequence belongs to the SLC26A/SulP transporter (TC 2.A.53) family.

It localises to the membrane. High-affinity H(+)/sulfate cotransporter that mediates the uptake of sulfate by plant roots from low concentrations of sulfate in the soil solution. This Stylosanthes hamata (Caribbean stylo) protein is High affinity sulfate transporter 1 (ST1).